The primary structure comprises 386 residues: Probable pectin lyase E (386 aa).

The first 16 residues, 1–16, serve as a signal peptide directing secretion; sequence MKTAVLSLFLALQTYA. Cys77 and Cys101 are joined by a disulfide. Asn124 is a glycosylation site (N-linked (GlcNAc...) asparagine). Residue Arg251 is part of the active site. Cysteines 326 and 334 form a disulfide.

Belongs to the polysaccharide lyase 1 family.

Its subcellular location is the secreted. The catalysed reaction is Eliminative cleavage of (1-&gt;4)-alpha-D-galacturonan methyl ester to give oligosaccharides with 4-deoxy-6-O-methyl-alpha-D-galact-4-enuronosyl groups at their non-reducing ends.. Its function is as follows. Pectinolytic enzymes consist of four classes of enzymes: pectin lyase, polygalacturonase, pectin methylesterase and rhamnogalacturonase. Among pectinolytic enzymes, pectin lyase is the most important in depolymerization of pectin, since it cleaves internal glycosidic bonds of highly methylated pectins. The chain is Probable pectin lyase E (pelE) from Aspergillus fumigatus (strain CBS 144.89 / FGSC A1163 / CEA10) (Neosartorya fumigata).